A 276-amino-acid chain; its full sequence is Putative oxidoreductase SadH (276 aa).

Ser142 is a binding site for substrate. Tyr155 acts as the Proton acceptor in catalysis.

It belongs to the short-chain dehydrogenases/reductases (SDR) family.

Functionally, required for maintaining the appropriate mycolic acid composition and permeability of the envelope on its exposure to acidic pH. The sequence is that of Putative oxidoreductase SadH (sadH) from Mycobacterium tuberculosis (strain CDC 1551 / Oshkosh).